Consider the following 388-residue polypeptide: Protein kes1 (388 aa).

It belongs to the OSBP family.

Functionally, lipid transporter involved in lipid countertransport between the Golgi complex and membranes of the endoplasmic reticulum: specifically exchanges sterol with phosphatidylinositol 4-phosphate (PI4P), delivering sterol to the Golgi in exchange for PI4P, which is degraded by the SAC1 phosphatase in the endoplasmic reticulum. This is Protein kes1 (kes1) from Schizosaccharomyces pombe (strain 972 / ATCC 24843) (Fission yeast).